The following is a 159-amino-acid chain: Cyclic pyranopterin monophosphate synthase (159 aa).

Substrate contacts are provided by residues 76–78 (LCH) and 114–115 (ME). Aspartate 129 is an active-site residue.

This sequence belongs to the MoaC family. In terms of assembly, homohexamer; trimer of dimers.

It carries out the reaction (8S)-3',8-cyclo-7,8-dihydroguanosine 5'-triphosphate = cyclic pyranopterin phosphate + diphosphate. The protein operates within cofactor biosynthesis; molybdopterin biosynthesis. In terms of biological role, catalyzes the conversion of (8S)-3',8-cyclo-7,8-dihydroguanosine 5'-triphosphate to cyclic pyranopterin monophosphate (cPMP). The protein is Cyclic pyranopterin monophosphate synthase of Psychromonas ingrahamii (strain DSM 17664 / CCUG 51855 / 37).